A 294-amino-acid chain; its full sequence is MYB-like transcription factor ODO1 (294 aa).

2 HTH myb-type domains span residues 9–61 and 62–116; these read KLGV…TNYL and RPDL…KKKL. DNA-binding regions (H-T-H motif) lie at residues 37–61 and 89–112; these read WRAV…TNYL and WSKI…NTHI. 2 disordered regions span residues 128 to 152 and 171 to 191; these read PLKK…NGHQ and TEFD…NSSC.

Restricted to the petals, with the highest expression in the limb, probably in both epidermal and mesophyll cell layers.

The protein resides in the nucleus. Functionally, R2R3 MYB-type transcription factor controlling the production of volatile organic compounds (VOCs), including floral volatile benzenoids and phenylpropanoids (FVBP), in flowers of fragrant cultivars (e.g. cv. Mitchell and cv. V26) by regulating the shikimate pathway, via the activation of several genes (e.g. EPSPS, ADT1, PAL1, CFAT and CCoAOMT1). This scent, mostly produced in the evening and night by the petals, attracts the pollinators (e.g. the night-active hawkmoth pollinator Manduca sexta). Promotes the expression of ABCG1 in petals three hours before the onset of volatile scent emission. Anthocyanins production is not controlled by ODO1 as color and scent are produced at different stages of development. Seems to trigger a negative feed-back loop that represses the expression of EOBI. This is MYB-like transcription factor ODO1 from Petunia hybrida (Petunia).